Reading from the N-terminus, the 316-residue chain is 4-diphosphocytidyl-2-C-methyl-D-erythritol kinase (316 aa).

Lysine 23 is a catalytic residue. 108–118 (PVAGGMAGGSA) serves as a coordination point for ATP. Aspartate 150 is an active-site residue.

Belongs to the GHMP kinase family. IspE subfamily.

It catalyses the reaction 4-CDP-2-C-methyl-D-erythritol + ATP = 4-CDP-2-C-methyl-D-erythritol 2-phosphate + ADP + H(+). Its pathway is isoprenoid biosynthesis; isopentenyl diphosphate biosynthesis via DXP pathway; isopentenyl diphosphate from 1-deoxy-D-xylulose 5-phosphate: step 3/6. Catalyzes the phosphorylation of the position 2 hydroxy group of 4-diphosphocytidyl-2C-methyl-D-erythritol. The protein is 4-diphosphocytidyl-2-C-methyl-D-erythritol kinase of Mycobacterium avium (strain 104).